A 603-amino-acid polypeptide reads, in one-letter code: NADPH-dependent diflavin oxidoreductase 1 (603 aa).

One can recognise a Flavodoxin-like domain in the interval 8–152; it reads VLVLYGSETG…SFVRWTGRLY (145 aa). FMN is bound by residues 14-19, 61-64, 99-108, and glutamate 134; these read SETGNA, STTG, and LGDSTYLKFN. Residues 210–457 form the FAD-binding FR-type domain; that stretch reads PDGWTATLVG…RKPVLSPIHG (248 aa). Residues arginine 358, 388-391, and 429-432 contribute to the FAD site; these read RDFS and GLCS. Residues threonine 472, 528–529, and 534–538 contribute to the NADP(+) site; these read SR and KIYVQ. FAD is bound at residue tryptophan 603.

The protein belongs to the NADPH-dependent diflavin oxidoreductase NDOR1 family. It in the N-terminal section; belongs to the flavodoxin family. This sequence in the C-terminal section; belongs to the flavoprotein pyridine nucleotide cytochrome reductase family. Interacts with DRE2; as part of the cytosolic iron-sulfur (Fe-S) protein assembly (CIA) machinery. The cofactor is FAD. FMN serves as cofactor.

The protein localises to the cytoplasm. The protein resides in the mitochondrion. It carries out the reaction 2 oxidized [2Fe-2S]-[protein] + NADPH = 2 reduced [2Fe-2S]-[protein] + NADP(+) + H(+). NADPH-dependent reductase which is a central component of the cytosolic iron-sulfur (Fe-S) protein assembly (CIA) machinery. Transfers electrons from NADPH via its FAD and FMN prosthetic groups to the [2Fe-2S] cluster of DRE2, another key component of the CIA machinery. In turn, this reduced cluster provides electrons for assembly of cytosolic iron-sulfur cluster proteins. Positively controls H(2)O(2)-induced cell death. The polypeptide is NADPH-dependent diflavin oxidoreductase 1 (Gibberella zeae (strain ATCC MYA-4620 / CBS 123657 / FGSC 9075 / NRRL 31084 / PH-1) (Wheat head blight fungus)).